The primary structure comprises 270 residues: Monocyte to macrophage differentiation factor 2 (270 aa).

The Cytoplasmic segment spans residues 1 to 38; the sequence is MFAPRLLDFQKTKYARFMNHRVPAHKRYQPTEYEHAAN. A helical membrane pass occupies residues 39 to 59; that stretch reads CATHAFWIIPSILGSSNLYFL. At 60 to 65 the chain is on the lumenal side; the sequence is SDDDWE. Residues 66–86 traverse the membrane as a helical segment; it reads TISAWIYGLGLCGLFVVSTVF. Over 87–102 the chain is Cytoplasmic; the sequence is HTISWKKSHLRMVEHC. A helical membrane pass occupies residues 103 to 123; sequence LHMFDRMVIYFFIAASYAPWL. The Lumenal segment spans residues 124–132; that stretch reads NLRELGPWA. The helical transmembrane segment at 133–153 threads the bilayer; it reads SHMRWLVWIMASVGTIYVFFF. Over 154 to 182 the chain is Cytoplasmic; it reads HERTGSCVQFLRGEACPKAGTACLPARYK. Residues 183-203 traverse the membrane as a helical segment; that stretch reads LVELLCYVVMGFFPALVILSM. Residues 204–205 are Lumenal-facing; sequence PN. The chain crosses the membrane as a helical span at residues 206-226; that stretch reads TEGIWELVTGGVFYCLGMVFF. Residues 227–233 lie on the Cytoplasmic side of the membrane; that stretch reads KSDGRIP. The chain crosses the membrane as a helical span at residues 234–254; that stretch reads FAHAIWHLFVAFGAGTHYYAI. Over 255-270 the chain is Lumenal; sequence WRYLYLPSTLQTKVSK.

This sequence belongs to the ADIPOR family. As to expression, shows restricted expression with highest levels in brain and testis.

It is found in the golgi apparatus membrane. This is Monocyte to macrophage differentiation factor 2 from Homo sapiens (Human).